The following is a 113-amino-acid chain: Single-stranded DNA-binding protein B (113 aa).

In terms of domain architecture, SSB spans 1-104 (MFNQVMLVGR…VLADTVRFMD (104 aa)). Y82 is subject to Phosphotyrosine.

In terms of assembly, homotetramer. In terms of processing, phosphorylated by YwqD, which increases ssDNA affinity; dephosphorylated by YwqE.

Its subcellular location is the cytoplasm. Functionally, not essential for replication of the chromosome, but is required for optimal competence. Binds ssDNA, binding is facilitated by DprA, acts as an accessory factor for homologous DNA strand exchange. The chain is Single-stranded DNA-binding protein B (ssbB) from Bacillus subtilis (strain 168).